The primary structure comprises 330 residues: Aspartate--ammonia ligase (330 aa).

This sequence belongs to the class-II aminoacyl-tRNA synthetase family. AsnA subfamily.

Its subcellular location is the cytoplasm. The catalysed reaction is L-aspartate + NH4(+) + ATP = L-asparagine + AMP + diphosphate + H(+). Its pathway is amino-acid biosynthesis; L-asparagine biosynthesis; L-asparagine from L-aspartate (ammonia route): step 1/1. In Escherichia fergusonii (strain ATCC 35469 / DSM 13698 / CCUG 18766 / IAM 14443 / JCM 21226 / LMG 7866 / NBRC 102419 / NCTC 12128 / CDC 0568-73), this protein is Aspartate--ammonia ligase.